The chain runs to 445 residues: MATASQIRLRPRLGVARATDTNPDGALEAANRLLQKNHNEHHMFWRSVAGHNHVAHSVLNTLALGGGPGDLQRAFDDGAEIQVPIPPMDRDAAASLSTPDQFRARMGSLEQYPNFLVFFTKEIETRGYPAVVIEYCFSGTSIAESMFANLFEGLYHPLIHLALGIEFDQPSIVAEGLAQAACHDSMNIEPFLFGTDKLAKTQDAPIDLNTPLLSLFHAVRDNEVLRAAAHRDHGDGVARVRDGILGRAREEISLIAARFRVDVDELDHRAAEMISCAAYLAGSAQRPGKARKIDFFHLHAVTASLGLIVLLQQPWVTPEQKARLIEWKARVDLVWYAASGAVELRRKDIVDYRPRHGLTWDSLYQAVRRVHDDGHLAKFIRALKAGEQISRPFEQGKRAEAFPIKGSMWLRIAQMAYDSSAGRPIEEKWIWGAGFEPNWATVPAV.

The protein belongs to the questin oxidase family. It depends on NADPH as a cofactor. In terms of tissue distribution, specifically expressed in conidia.

It participates in secondary metabolite biosynthesis. Questin oxidase; part of the gene cluster that mediates the biosynthesis of trypacidin, a mycotoxin with antiprotozoal activity and that plays a role in the infection process. The pathway begins with the synthesis of atrochrysone thioester by the polyketide synthase (PKS) tpcC. The atrochrysone carboxyl ACP thioesterase tpcB then breaks the thioester bond and releases the atrochrysone carboxylic acid from tpcC. The decarboxylase tpcK converts atrochrysone carboxylic acid to atrochrysone which is further reduced into emodin anthrone. The next step is performed by the emodin anthrone oxygenase tpcL that catalyzes the oxidation of emodinanthrone to emodin. Emodin O-methyltransferase encoded by tpcA catalyzes methylation of the 8-hydroxy group of emodin to form questin. Ring cleavage of questin by questin oxidase tpcI leads to desmethylsulochrin via several intermediates including questin epoxide. Another methylation step catalyzed by tpcM leads to the formation of sulochrin which is further converted to monomethylsulfochrin by tpcH. Finally, the tpcJ catalyzes the conversion of monomethylsulfochrin to trypacidin. Trypacidin is toxic for human pulmonary and bronchial epithelial cells by initiating the intracellular formation of nitric oxide (NO) and hydrogen peroxide (H(2)O(2)), thus triggering host necrotic cell death. The trypacidin pathway is also able to produce endocrocin via a distinct route from the endocrocin Enc pathway. The polypeptide is Questin oxidase (Aspergillus fumigatus (strain ATCC MYA-4609 / CBS 101355 / FGSC A1100 / Af293) (Neosartorya fumigata)).